The chain runs to 112 residues: Serum amyloid A protein (112 aa).

Residue Q1 is modified to Pyrrolidone carboxylic acid. Residues 75-86 (MTRDQVREDTKA) are compositionally biased toward basic and acidic residues. Positions 75-112 (MTRDQVREDTKADQFANEWGRSGKDPNHFRPPGLPDKY) are disordered.

Belongs to the SAA family. Expressed by the liver; secreted in plasma.

It is found in the secreted. Major acute phase reactant. Apolipoprotein of the HDL complex. The protein is Serum amyloid A protein (SAA1) of Ovis aries (Sheep).